The chain runs to 130 residues: Small ribosomal subunit protein eS6 (130 aa).

A disordered region spans residues 78 to 98 (SGPPGFRPERKGERRRKTVRG).

The protein belongs to the eukaryotic ribosomal protein eS6 family.

This is Small ribosomal subunit protein eS6 from Methanopyrus kandleri (strain AV19 / DSM 6324 / JCM 9639 / NBRC 100938).